The chain runs to 115 residues: Succinate dehydrogenase hydrophobic membrane anchor subunit (115 aa).

The Cytoplasmic segment spans residues 1–15 (MVSNASALGRNGVHD). The chain crosses the membrane as a helical span at residues 16–36 (FILVRATAIVLTLYIIYMVGF). Over 37–58 (FATSGELTYEVWIGFFASAFTK) the chain is Periplasmic. The helical transmembrane segment at 59-80 (VFTLLALFSILIHAWIGMWQVL) threads the bilayer. H71 is a binding site for heme. The Cytoplasmic segment spans residues 81 to 90 (TDYVKPLALR). Y83 lines the a ubiquinone pocket. A helical membrane pass occupies residues 91–115 (LMLQLVIVVALVVYVIYGFVVVWGV).

In terms of assembly, part of an enzyme complex containing four subunits: a flavoprotein, an iron-sulfur protein, plus two membrane-anchoring proteins, SdhC and SdhD. The complex can form homotrimers. Heme is required as a cofactor.

It localises to the cell inner membrane. Its pathway is carbohydrate metabolism; tricarboxylic acid cycle. Its function is as follows. Membrane-anchoring subunit of succinate dehydrogenase (SDH). The polypeptide is Succinate dehydrogenase hydrophobic membrane anchor subunit (sdhD) (Escherichia coli O6:H1 (strain CFT073 / ATCC 700928 / UPEC)).